The following is a 475-amino-acid chain: MAAGAMRGLAVAGGGESSDSDDDGWEIGYLDRAAQKLRGPLPTEEKNETFKKALTTGDISLVQELLDSGISVDTSFRYGWTPLMYAANVANVEMVQVLLDRGANASFSKDKQTILISACSARGTEEQILKCVDLLLSRNADPNMACRRLMTPVMYAARNGHPQVVALLVAHGADVNAQDENGYTALTWAARQGHKHVVLKLLELGANKMIQTKDGKTPSEIAKRNKHVEIFNFLSLTLNPLEGKLQQLTKEETICKLLTTESDKEKDHIFSSYTAFGDLEIFLHGLGLEHMTDLLKERDITLRHLLTMRKDEFAKNGITSRDQQKILAALKELEVEEIKFGELPEVAKLEISGDEFLNFLLKLSKQCGHLITAVQNIITELPVNSHKIVLEWASPRNFTSVCEELVSNVEDLSEEVCKLKDLIQKLQNERENDPTQIPLIEEVSTWNSRILKRTAITVCGFGFVLFICKLTLQRK.

Residues S17, S18, and S20 each carry the phosphoserine modification. ANK repeat units lie at residues 45-74, 78-107, 110-144, 148-177, 181-210, and 214-243; these read EKNE…SVDT, YGWT…NASF, DKQT…DPNM, RLMT…DVNA, NGYT…NKMI, and DGKT…PLEG. The 63-residue stretch at 272–334 folds into the SAM domain; sequence SYTAFGDLEI…KILAALKELE (63 aa).

As to quaternary structure, interacts with DDX4, PIWIL1, RANBP9 and TDRD1.

The protein resides in the cytoplasm. Its function is as follows. Plays a central role during spermatogenesis by repressing transposable elements and preventing their mobilization, which is essential for the germline integrity. Acts via the piRNA metabolic process, which mediates the repression of transposable elements during meiosis by forming complexes composed of piRNAs and Piwi proteins and governs the methylation and subsequent repression of transposons. Its association with pi-bodies suggests a participation in the primary piRNAs metabolic process. Required prior to the pachytene stage to facilitate the production of multiple types of piRNAs, including those associated with repeats involved in the regulation of retrotransposons. May act by mediating protein-protein interactions during germ cell maturation. In Atelerix albiventris (Middle-African hedgehog), this protein is Ankyrin repeat, SAM and basic leucine zipper domain-containing protein 1 (ASZ1).